A 512-amino-acid polypeptide reads, in one-letter code: Maturase K (512 aa).

Belongs to the intron maturase 2 family. MatK subfamily.

It is found in the plastid. It localises to the chloroplast. Usually encoded in the trnK tRNA gene intron. Probably assists in splicing its own and other chloroplast group II introns. The chain is Maturase K from Ginkgo biloba (Ginkgo).